Reading from the N-terminus, the 208-residue chain is Uridine kinase (208 aa).

Residue 12-19 participates in ATP binding; it reads GGSGGGKT.

It belongs to the uridine kinase family.

Its subcellular location is the cytoplasm. It catalyses the reaction uridine + ATP = UMP + ADP + H(+). It carries out the reaction cytidine + ATP = CMP + ADP + H(+). It functions in the pathway pyrimidine metabolism; CTP biosynthesis via salvage pathway; CTP from cytidine: step 1/3. Its pathway is pyrimidine metabolism; UMP biosynthesis via salvage pathway; UMP from uridine: step 1/1. The polypeptide is Uridine kinase (Streptococcus equi subsp. equi (strain 4047)).